The following is a 461-amino-acid chain: MSVRIEHDTFGEIEVPGDKYWGAQTERSKRNFPVGKERMPIEVVYGFAQLKRGAALANHELGKLSDAKKDAIVYACDLILKGELDEHFPLVVWQTGSGTQSNMNVNEVVSFVANKYLKEQGIDESIHPNDDVNKSQSSNDTFPTAMHVALYHEVETKLEPALKHLRDTFKEKEDKYQSIIKIGRTHLQDATPIKLGQEISGWRYMLDKCEELLAESKKHILSLAIGGTAVGTGINAHPEFGNKVAKFISENTGYNFVSSENKFHALTSHDEVVQLHGTLKALAADLMKIANDIRWLASGPRAGLAEISIPENEPGSSIMPGKVNPTQCEMLTMVAVQVMGNDTTVGIASSQGNFELNVFKPVILHNTLQSIYLLADGMQTFNDNCAVGIEPIEENINNYLNQSLMLVTALNPHIGYEKAAQIAKKAHKEGLTLKESAIQSGHVTEEQFEEWIKPEDMVDPH.

Substrate contacts are provided by residues 97–99 (SGT), 127–130 (HPND), 137–139 (SSN), and Thr185. His186 functions as the Proton donor/acceptor in the catalytic mechanism. Residue Ser316 is part of the active site. Residues Ser317 and 322 to 324 (KVN) each bind substrate.

It belongs to the class-II fumarase/aspartase family. Fumarase subfamily. Homotetramer.

The protein localises to the cytoplasm. The enzyme catalyses (S)-malate = fumarate + H2O. It participates in carbohydrate metabolism; tricarboxylic acid cycle; (S)-malate from fumarate: step 1/1. Involved in the TCA cycle. Catalyzes the stereospecific interconversion of fumarate to L-malate. The protein is Fumarate hydratase class II of Staphylococcus haemolyticus (strain JCSC1435).